The chain runs to 387 residues: 1-hydroxy-2-naphthoate 1,2-dioxygenasee (387 aa).

2 Cupin type-2 domains span residues 103 to 171 and 271 to 337; these read FQLV…VWLD and VQRL…VLLF.

As to quaternary structure, homohexamer. The cofactor is Fe(2+).

The enzyme catalyses 1-hydroxy-2-naphthoate + O2 = (3Z)-4-(2-carboxyphenyl)-2-oxobut-3-enoate + H(+). Functionally, dioxygenase involved in phenanthrene catabolism by mediating cleavage of 1-hydroxy-2-naphthoate. The protein is 1-hydroxy-2-naphthoate 1,2-dioxygenasee (phdI) of Nocardioides sp. (strain KP7).